A 207-amino-acid chain; its full sequence is MEKKIPRPVIKRLGLYYRCLNRLYEEGIEYVASKDIAERLGIKSSQVRKDLSYFGEFGKRGVGYNTYELMERLEDIIGVNKYWNVIVIGAGNIGSAIANYEGLRKEKFNVIGIFDADRSKVGRKIGRLIVKHFSEIDDFFKKNIVEIAVLAVPENAAQMVVDKLEELGIKGIVNFAPVKLRTNIPVEDVDITLSFKSLSFKIERNIE.

Residues 15–54 constitute a DNA-binding region (H-T-H motif); sequence LYYRCLNRLYEEGIEYVASKDIAERLGIKSSQVRKDLSYF. 89 to 94 is a binding site for NAD(+); sequence GAGNIG.

It belongs to the transcriptional regulatory Rex family. As to quaternary structure, homodimer.

It localises to the cytoplasm. Functionally, modulates transcription in response to changes in cellular NADH/NAD(+) redox state. This chain is Redox-sensing transcriptional repressor Rex, found in Thermosipho africanus (strain TCF52B).